The primary structure comprises 323 residues: GMP reductase (323 aa).

Cys-174 functions as the Thioimidate intermediate in the catalytic mechanism. An NADP(+)-binding site is contributed by 203–226 (IIADGGIRHNGDIAKSVRFGASMV).

The protein belongs to the IMPDH/GMPR family. GuaC type 2 subfamily.

It carries out the reaction IMP + NH4(+) + NADP(+) = GMP + NADPH + 2 H(+). Functionally, catalyzes the irreversible NADPH-dependent deamination of GMP to IMP. It functions in the conversion of nucleobase, nucleoside and nucleotide derivatives of G to A nucleotides, and in maintaining the intracellular balance of A and G nucleotides. The protein is GMP reductase of Oenococcus oeni (strain ATCC BAA-331 / PSU-1).